Reading from the N-terminus, the 484-residue chain is MSAEHSSRRVAMVTLGCARNEVDSEELAGNLHQRGWDLIDDESSADVVVVNTCGFVESAKKDSVDTLLAASDTGAKVVAVGCMAERYGAELAEHLPEADAVLGFDHYGNLAERLDDVLAGRAIQPHQPQDRRKMLPITPVARPAAAAASEVAVPGHGWVPSTRGIARRRLDDSPLAALKLASGCDRRCSFCAIPSFRGSFLSRQPEEVLGEAAWLAEQGAKELFLVSENSTSYGKDLSDPRALETLLPRLAGIDGVDRVRVSYLQPAETRPGLVRAIATTPGVAPYFDLSFQHSSEKVLRRMRRFGSTESFLALIEQIRELAPEAGIRSNVIVGFPGETEEDFEELQDFLTRARLDAVGVFGYSDEDGTEAAGFDGKLDADVVAARVEQVSALADELVAQRAEDRVGTEVRVLVERDEDGEVTGRAEHQGPEVDGECVVVDAGGAGVGEVVHCRVIASEGVDLVVRPVGAAQDSSQLRGAGEGS.

The region spanning 8 to 119 is the MTTase N-terminal domain; it reads RRVAMVTLGC…LAERLDDVLA (112 aa). Positions 17, 53, 82, 184, 188, and 191 each coordinate [4Fe-4S] cluster. The Radical SAM core domain occupies 170 to 401; the sequence is LDDSPLAALK…ALADELVAQR (232 aa). Residues 403-469 enclose the TRAM domain; that stretch reads EDRVGTEVRV…GVDLVVRPVG (67 aa).

This sequence belongs to the methylthiotransferase family. RimO subfamily. Requires [4Fe-4S] cluster as cofactor.

The protein resides in the cytoplasm. The enzyme catalyses L-aspartate(89)-[ribosomal protein uS12]-hydrogen + (sulfur carrier)-SH + AH2 + 2 S-adenosyl-L-methionine = 3-methylsulfanyl-L-aspartate(89)-[ribosomal protein uS12]-hydrogen + (sulfur carrier)-H + 5'-deoxyadenosine + L-methionine + A + S-adenosyl-L-homocysteine + 2 H(+). Functionally, catalyzes the methylthiolation of an aspartic acid residue of ribosomal protein uS12. The protein is Ribosomal protein uS12 methylthiotransferase RimO of Saccharopolyspora erythraea (strain ATCC 11635 / DSM 40517 / JCM 4748 / NBRC 13426 / NCIMB 8594 / NRRL 2338).